The sequence spans 201 residues: Ribosome maturation factor RimP (201 aa).

The protein belongs to the RimP family.

The protein resides in the cytoplasm. In terms of biological role, required for maturation of 30S ribosomal subunits. In Acidobacterium capsulatum (strain ATCC 51196 / DSM 11244 / BCRC 80197 / JCM 7670 / NBRC 15755 / NCIMB 13165 / 161), this protein is Ribosome maturation factor RimP.